We begin with the raw amino-acid sequence, 319 residues long: Proline hydroxylase buaE (319 aa).

Positions 168–280 (NSSELRLNHY…RYSIAYFGKP (113 aa)) constitute a Fe2OG dioxygenase domain. Fe cation is bound by residues His195, Asp197, and His255. Arg271 is a 2-oxoglutarate binding site.

This sequence belongs to the iron/ascorbate-dependent oxidoreductase family. The cofactor is Fe(2+).

Its pathway is mycotoxin biosynthesis. Its function is as follows. Proline hydroxylase; part of the gene cluster that mediates the biosynthesis of burnettramic acids, an unusual class of bolaamphiphilic pyrrolizidinediones that display potent antibacterial, antifungal, and cytotoxic activities. The first step of the biosynthesis of burnettramic acids is the hydroxylation of proline by the proline hydroxylase buaE to generate 4-hydroxyproline. The PKS-NRPS buaA and trans-enoyl reductase buaC construct the highly reduced polyketide chain, and the condensation (C) domain of buaA then catalyzes the amide bond formation with the activated 4-hydroxyproline. This is followed by the R domain releasing the nascent polyketide-peptide directly via a Dieckmann condensation to afford a tetramic acid fused to the hydroxyproline, generating the bicyclic pyrrolidinedione moiety. The cytochrome P450 monooxygenases buaD and buaG are likely responsible for the multiple hydroxylations on the polyketide chain and its terminus, although in the heterologous context, buaD does not appear to be required. Therefore, while buaG may be a multifunctional cytochrome P450 monooxygenase, it cannot be ruled out that the two secondary alcohols on the polyketide chain could have an acetate origin. Finally, the glycosyltransferase buaB transfers beta-D-mannose to the aglycone burnettramic acid A to form burnettramic acid A. Burnettramic acid B is a minor cis-pyrrolizidine epimer of burnettramic acid A and it is likely that small amounts of it form naturally in acidic environments. The protein is Proline hydroxylase buaE of Petromyces alliaceus (Aspergillus alliaceus).